A 103-amino-acid chain; its full sequence is MANQRIRIRLKSFDHRLIDQSAQEIVDTAKRTGAQVCGPVPLPTRIERFNVLTSPHVNKDARDQYEIRTHKRMLDIVQPTDKTVDALMKLDLAAGVDVQIALG.

Belongs to the universal ribosomal protein uS10 family. As to quaternary structure, part of the 30S ribosomal subunit.

Its function is as follows. Involved in the binding of tRNA to the ribosomes. The polypeptide is Small ribosomal subunit protein uS10 (Psychrobacter sp. (strain PRwf-1)).